The sequence spans 184 residues: Elongation factor P (184 aa).

Belongs to the elongation factor P family.

Its subcellular location is the cytoplasm. The protein operates within protein biosynthesis; polypeptide chain elongation. In terms of biological role, involved in peptide bond synthesis. Stimulates efficient translation and peptide-bond synthesis on native or reconstituted 70S ribosomes in vitro. Probably functions indirectly by altering the affinity of the ribosome for aminoacyl-tRNA, thus increasing their reactivity as acceptors for peptidyl transferase. This Albidiferax ferrireducens (strain ATCC BAA-621 / DSM 15236 / T118) (Rhodoferax ferrireducens) protein is Elongation factor P.